Reading from the N-terminus, the 33-residue chain is Protamine-M6/M7 (33 aa).

The interval P1–R33 is disordered.

Testis.

The protein localises to the nucleus. The protein resides in the chromosome. Functionally, protamines substitute for histones in the chromatin of sperm during the haploid phase of spermatogenesis. They compact sperm DNA into a highly condensed, stable and inactive complex. The protein is Protamine-M6/M7 of Mugil cephalus (Flathead mullet).